A 524-amino-acid chain; its full sequence is Phosphoenolpyruvate carboxykinase (ATP) (524 aa).

Substrate is bound by residues R52, Y188, and K194. ATP contacts are provided by residues K194, H213, and 229 to 237 (GLSGTGKTT). K194 and H213 together coordinate Mn(2+). D250 lines the Mn(2+) pocket. Residues E278, R314, and T439 each coordinate ATP. A substrate-binding site is contributed by R314.

It belongs to the phosphoenolpyruvate carboxykinase (ATP) family. Mn(2+) is required as a cofactor.

Its subcellular location is the cytoplasm. It carries out the reaction oxaloacetate + ATP = phosphoenolpyruvate + ADP + CO2. It functions in the pathway carbohydrate biosynthesis; gluconeogenesis. In terms of biological role, involved in the gluconeogenesis. Catalyzes the conversion of oxaloacetate (OAA) to phosphoenolpyruvate (PEP) through direct phosphoryl transfer between the nucleoside triphosphate and OAA. The chain is Phosphoenolpyruvate carboxykinase (ATP) from Campylobacter jejuni (strain RM1221).